A 378-amino-acid polypeptide reads, in one-letter code: Isobutylamine N-hydroxylase (378 aa).

In terms of assembly, exists in dimeric or trimeric form depending upon buffer conditions. It can form an isobutylamine N-hydroxylase two component enzyme system formed of a flavin reductase component (VlmR) and a monooxygenase component (VlmH).

It carries out the reaction 2-methylpropan-1-amine + FADH2 + O2 = N-(2-methylpropyl)hydroxylamine + FAD + H2O + 2 H(+). It catalyses the reaction 2-methylpropan-1-amine + FMNH2 + O2 = N-(2-methylpropyl)hydroxylamine + FMN + H2O + 2 H(+). Inhibited by 5',5'-dithio-bis(2-nitrobenzoic acid) (DTNB) and 4-(hydroxymercuri)benzoic acid (p-HMB). Functionally, involved in the biosynthesis of the azoxy antibiotic valanimycin, which has an antitumor activity. Catalyzes the oxidation of isobutylamine to isobutylhydroxylamine via the formation of a flavin 4a-hydroperoxide. Unlike other known N-hydroxylases, isobutylamine N-hydroxylase cannot carry out the reduction of the flavin cofactor and requires the NADPH-flavin oxidoreductase VlmR. Also able to oxidize propan-1-amine, butan-1-amine, butan-2-amine and benzylamine. It has a similar activity with either FMNH(2) or FADH(2). The protein is Isobutylamine N-hydroxylase of Streptomyces viridifaciens.